A 305-amino-acid polypeptide reads, in one-letter code: tRNA uridine(34) hydroxylase (305 aa).

The Rhodanese domain maps to 126–220 (SDPEVIVIDT…YLEQIPPEES (95 aa)). Cysteine 180 functions as the Cysteine persulfide intermediate in the catalytic mechanism.

This sequence belongs to the TrhO family.

The catalysed reaction is uridine(34) in tRNA + AH2 + O2 = 5-hydroxyuridine(34) in tRNA + A + H2O. Its function is as follows. Catalyzes oxygen-dependent 5-hydroxyuridine (ho5U) modification at position 34 in tRNAs. The sequence is that of tRNA uridine(34) hydroxylase from Trichormus variabilis (strain ATCC 29413 / PCC 7937) (Anabaena variabilis).